A 240-amino-acid chain; its full sequence is 1-(5-phosphoribosyl)-5-[(5-phosphoribosylamino)methylideneamino] imidazole-4-carboxamide isomerase 1 (240 aa).

D8 functions as the Proton acceptor in the catalytic mechanism. D129 functions as the Proton donor in the catalytic mechanism.

This sequence belongs to the HisA/HisF family.

Its subcellular location is the cytoplasm. The catalysed reaction is 1-(5-phospho-beta-D-ribosyl)-5-[(5-phospho-beta-D-ribosylamino)methylideneamino]imidazole-4-carboxamide = 5-[(5-phospho-1-deoxy-D-ribulos-1-ylimino)methylamino]-1-(5-phospho-beta-D-ribosyl)imidazole-4-carboxamide. Its pathway is amino-acid biosynthesis; L-histidine biosynthesis; L-histidine from 5-phospho-alpha-D-ribose 1-diphosphate: step 4/9. The protein is 1-(5-phosphoribosyl)-5-[(5-phosphoribosylamino)methylideneamino] imidazole-4-carboxamide isomerase 1 of Ruegeria pomeroyi (strain ATCC 700808 / DSM 15171 / DSS-3) (Silicibacter pomeroyi).